Here is a 391-residue protein sequence, read N- to C-terminus: Phosphopentomutase (391 aa).

Mn(2+) contacts are provided by D12, D285, H290, D326, H327, and H338.

The protein belongs to the phosphopentomutase family. Mn(2+) is required as a cofactor.

It is found in the cytoplasm. The catalysed reaction is 2-deoxy-alpha-D-ribose 1-phosphate = 2-deoxy-D-ribose 5-phosphate. It carries out the reaction alpha-D-ribose 1-phosphate = D-ribose 5-phosphate. The protein operates within carbohydrate degradation; 2-deoxy-D-ribose 1-phosphate degradation; D-glyceraldehyde 3-phosphate and acetaldehyde from 2-deoxy-alpha-D-ribose 1-phosphate: step 1/2. Its function is as follows. Isomerase that catalyzes the conversion of deoxy-ribose 1-phosphate (dRib-1-P) and ribose 1-phosphate (Rib-1-P) to deoxy-ribose 5-phosphate (dRib-5-P) and ribose 5-phosphate (Rib-5-P), respectively. In Herpetosiphon aurantiacus (strain ATCC 23779 / DSM 785 / 114-95), this protein is Phosphopentomutase.